Consider the following 357-residue polypeptide: Probable cinnamyl alcohol dehydrogenase (357 aa).

Cys-47 is a binding site for Zn(2+). Ser-49 is an NADP(+) binding site. Positions 69, 70, 100, 103, 106, 114, and 163 each coordinate Zn(2+). NADP(+) contacts are provided by residues Thr-167, 188-193 (GLGGVG), 211-216 (SSSDKK), Thr-251, Gly-275, and 298-300 (SFI).

Belongs to the zinc-containing alcohol dehydrogenase family. In terms of assembly, homodimer. Zn(2+) is required as a cofactor.

It catalyses the reaction (E)-cinnamyl alcohol + NADP(+) = (E)-cinnamaldehyde + NADPH + H(+). The enzyme catalyses (E)-coniferol + NADP(+) = (E)-coniferaldehyde + NADPH + H(+). The catalysed reaction is (E)-sinapyl alcohol + NADP(+) = (E)-sinapaldehyde + NADPH + H(+). It carries out the reaction (E)-4-coumaroyl alcohol + NADP(+) = (E)-4-coumaraldehyde + NADPH + H(+). It catalyses the reaction (E)-caffeyl alcohol + NADP(+) = (E)-caffeyl aldehyde + NADPH + H(+). It participates in aromatic compound metabolism; phenylpropanoid biosynthesis. Involved in lignin biosynthesis. Catalyzes the final step specific for the production of lignin monomers. Catalyzes the NADPH-dependent reduction of coniferaldehyde, 5-hydroxyconiferaldehyde, sinapaldehyde, 4-coumaraldehyde and caffeyl aldehyde to their respective alcohols. This is Probable cinnamyl alcohol dehydrogenase (CAD) from Pinus radiata (Monterey pine).